We begin with the raw amino-acid sequence, 890 residues long: Kinesin-like protein KIF20A (890 aa).

An N-acetylserine modification is found at serine 2. Residues serine 7, serine 14, and serine 21 each carry the phosphoserine modification. In terms of domain architecture, Kinesin motor spans 64–507 (KVKVYLRVRP…AKFSAIASQL (444 aa)). 160–167 (GVTNSGKT) contributes to the ATP binding site. Residue serine 528 is modified to Phosphoserine; by PLK1. A phosphoserine mark is found at serine 532, serine 662, serine 668, serine 685, and serine 825. Residues 611 to 762 (LDTQKELLEE…ESLQSAERAC (152 aa)) are a coiled coil. Residues 763 to 890 (CHSTGAGKLR…LKSGPFGKKY (128 aa)) form a globular region. A disordered region spans residues 832 to 865 (TNQENQQPNQQPPGKKPFLRNLLPRTPTCQSSTD). Threonine 857 bears the Phosphothreonine mark. 3 positions are modified to phosphoserine: serine 867, serine 878, and serine 883.

This sequence belongs to the TRAFAC class myosin-kinesin ATPase superfamily. Kinesin family. Phosphorylated by PLK1 at Ser-528 during mitosis, creating a docking site for PLK1 and recruiting PLK1 at central spindle.

The protein localises to the golgi apparatus. It localises to the cytoplasm. It is found in the cytoskeleton. Its subcellular location is the spindle. In terms of biological role, mitotic kinesin required for chromosome passenger complex (CPC)-mediated cytokinesis. Following phosphorylation by PLK1, involved in recruitment of PLK1 to the central spindle. Interacts with guanosine triphosphate (GTP)-bound forms of RAB6A and RAB6B. May act as a motor required for the retrograde RAB6 regulated transport of Golgi membranes and associated vesicles along microtubules. Has a microtubule plus end-directed motility. The sequence is that of Kinesin-like protein KIF20A (KIF20A) from Homo sapiens (Human).